We begin with the raw amino-acid sequence, 48 residues long: Cathepsin B (48 aa).

Belongs to the peptidase C1 family. In terms of assembly, dimer of a heavy chain and a light chain cross-linked by a disulfide bond.

The protein localises to the lysosome. The catalysed reaction is Hydrolysis of proteins with broad specificity for peptide bonds. Preferentially cleaves -Arg-Arg-|-Xaa bonds in small molecule substrates (thus differing from cathepsin L). In addition to being an endopeptidase, shows peptidyl-dipeptidase activity, liberating C-terminal dipeptides.. Thiol protease which is believed to participate in intracellular degradation and turnover of proteins. Has also been implicated in tumor invasion and metastasis. This is Cathepsin B (CTSB) from Coturnix japonica (Japanese quail).